The following is an 88-amino-acid chain: UPF0250 protein PM1928 (88 aa).

The protein belongs to the UPF0250 family.

The sequence is that of UPF0250 protein PM1928 from Pasteurella multocida (strain Pm70).